We begin with the raw amino-acid sequence, 407 residues long: Bifunctional enzyme IspD/IspF (407 aa).

The segment at 1–246 (MQPLAEATTI…RQDHVSFPDI (246 aa)) is 2-C-methyl-D-erythritol 4-phosphate cytidylyltransferase. A 2-C-methyl-D-erythritol 2,4-cyclodiphosphate synthase region spans residues 247–407 (RTGNGYDVHS…TVIYPGEVPE (161 aa)). Residues D253 and H255 each coordinate a divalent metal cation. Residues 253 to 255 (DVH) and 279 to 280 (HS) each bind 4-CDP-2-C-methyl-D-erythritol 2-phosphate. A divalent metal cation is bound at residue H287. 4-CDP-2-C-methyl-D-erythritol 2-phosphate-binding positions include 301–303 (DIG), 377–380 (TTNE), F384, and R387.

In the N-terminal section; belongs to the IspD/TarI cytidylyltransferase family. IspD subfamily. The protein in the C-terminal section; belongs to the IspF family. A divalent metal cation is required as a cofactor.

It catalyses the reaction 2-C-methyl-D-erythritol 4-phosphate + CTP + H(+) = 4-CDP-2-C-methyl-D-erythritol + diphosphate. It carries out the reaction 4-CDP-2-C-methyl-D-erythritol 2-phosphate = 2-C-methyl-D-erythritol 2,4-cyclic diphosphate + CMP. The protein operates within isoprenoid biosynthesis; isopentenyl diphosphate biosynthesis via DXP pathway; isopentenyl diphosphate from 1-deoxy-D-xylulose 5-phosphate: step 2/6. It functions in the pathway isoprenoid biosynthesis; isopentenyl diphosphate biosynthesis via DXP pathway; isopentenyl diphosphate from 1-deoxy-D-xylulose 5-phosphate: step 4/6. In terms of biological role, bifunctional enzyme that catalyzes the formation of 4-diphosphocytidyl-2-C-methyl-D-erythritol from CTP and 2-C-methyl-D-erythritol 4-phosphate (MEP) (IspD), and catalyzes the conversion of 4-diphosphocytidyl-2-C-methyl-D-erythritol 2-phosphate (CDP-ME2P) to 2-C-methyl-D-erythritol 2,4-cyclodiphosphate (ME-CPP) with a corresponding release of cytidine 5-monophosphate (CMP) (IspF). The sequence is that of Bifunctional enzyme IspD/IspF from Brucella anthropi (strain ATCC 49188 / DSM 6882 / CCUG 24695 / JCM 21032 / LMG 3331 / NBRC 15819 / NCTC 12168 / Alc 37) (Ochrobactrum anthropi).